The primary structure comprises 495 residues: Probable histidine ammonia-lyase (495 aa).

Positions 141–143 (ASG) form a cross-link, 5-imidazolinone (Ala-Gly). 2,3-didehydroalanine (Ser) is present on Ser-142.

The protein belongs to the PAL/histidase family. Contains an active site 4-methylidene-imidazol-5-one (MIO), which is formed autocatalytically by cyclization and dehydration of residues Ala-Ser-Gly.

The protein resides in the cytoplasm. It catalyses the reaction L-histidine = trans-urocanate + NH4(+). It participates in amino-acid degradation; L-histidine degradation into L-glutamate; N-formimidoyl-L-glutamate from L-histidine: step 1/3. In Thermoplasma volcanium (strain ATCC 51530 / DSM 4299 / JCM 9571 / NBRC 15438 / GSS1), this protein is Probable histidine ammonia-lyase.